A 682-amino-acid chain; its full sequence is Putative L-type lectin-domain containing receptor kinase I.1 (682 aa).

Residues 1-19 (MAQRLHLLLLLFLICFVNL) form the signal peptide. Over 20–292 (ISFSSQQDLS…RPKKPEKTSP (273 aa)) the chain is Extracellular. The tract at residues 27-264 (DLSFIYNGFN…YQYILGWSFS (238 aa)) is legume-lectin like. Residues Asn-60, Asn-130, Asn-187, Asn-210, and Asn-231 are each glycosylated (N-linked (GlcNAc...) asparagine). A helical membrane pass occupies residues 293–313 (LLIVLLIILAIIVMVVVGGFY). The Cytoplasmic segment spans residues 314–682 (LYRRKKYAEV…SHTIIYGDGR (369 aa)). The region spanning 348–622 (FNKDGRLGRG…VQYINRHQRL (275 aa)) is the Protein kinase domain. ATP-binding positions include 354 to 362 (LGRGGFGEV) and Lys-376. Residue Asp-472 is the Proton acceptor of the active site.

In the C-terminal section; belongs to the protein kinase superfamily. Ser/Thr protein kinase family. It in the N-terminal section; belongs to the leguminous lectin family.

The protein localises to the cell membrane. It catalyses the reaction L-seryl-[protein] + ATP = O-phospho-L-seryl-[protein] + ADP + H(+). The catalysed reaction is L-threonyl-[protein] + ATP = O-phospho-L-threonyl-[protein] + ADP + H(+). Functionally, involved in resistance response to the pathogenic fungus Alternaria brassicicola. This Arabidopsis thaliana (Mouse-ear cress) protein is Putative L-type lectin-domain containing receptor kinase I.1.